The chain runs to 463 residues: MSPSSHKPLILACGLPLSGHIMPVLSLVHGLTDDGYEATVVTGRAFEQKVRDVGADFVPLEGNADFDDHTLDDLVPGRKDMAPSFDRTVQDVEHMMVATLPEQFAAIQRAFKKLSASGRPVVLVSEVLFFGAHPISLGAPGFKPAGWICLGVLPLLIRSDHTLGLDNDRSPEAHAKKLAMNHALEHQIFVKATAKHKEICRELGCTEDPKFIWEHSYIAADKFLQLCPPSLEFSRDHLPSNFKFAGSTPKHRTQFTPPSWWGDVLSAKRVIMVTQGTFAVSYKHLIVPTLEALKDEPDTLTVAILGRRGAKLPDDVVVPENARVIDYFNYDALLPHVDALVYNGGYGGLQHSLSHSVPVVIAGDSEDKPMVASRAEAAGVAIDLKTGLPTVEQIKEAVDSIIGNPKFHEASKKVQMELESHNSLKILEESIEEIASHDFGLLTKSDEETEDIPVKGPALAVSS.

The protein belongs to the UDP-glycosyltransferase family.

It catalyses the reaction 18-hydroxy-(9Z)-octadecenoate + UDP-alpha-D-glucose = (9Z)-18-hydroxyoctadec-9-enoate 18-O-beta-D-glucoside + UDP + H(+). The catalysed reaction is 17-hydroxy-(9Z)-octadecenoate + UDP-alpha-D-glucose = (9Z)-17-hydroxyoctadec-9-enoate 17-O-beta-D-glucoside + UDP + H(+). Catalyzes the first glycosylation step of sophorolipid biosynthesis, the coupling of glucose to a hydroxylated fatty acid to give rise to a glucolipid. Can glycosylate all hydroxyl fatty acids generated by cytochrome P450 monooxygenases CYP52M1, CYP52N1 and CYP52E3 into their corresponding glucolipids. Main products are 17-O- and 18-O-(beta-D-glucopyranosyl)-octadecenoic acids. This chain is UDP-glucosyltransferase A1, found in Starmerella bombicola (Yeast).